The chain runs to 2129 residues: Transcription initiation factor TFIID subunit 1 (2129 aa).

Residues 1 to 423 form the Protein kinase 1 domain; that stretch reads MEMESDNSDD…VSQLHWEDDV (423 aa). Disordered stretches follow at residues 77–233, 246–348, 377–405, and 445–497; these read AEPP…DVRE, FSRL…PKVA, TKAA…EDPS, and AGWL…AEAP. Acidic residues predominate over residues 79-88; it reads PPSDDEEEED. Composition is skewed to basic and acidic residues over residues 110–121, 159–170, and 200–215; these read VKREDGAVKAQD, VEAKLTKDDKEL, and DDSK…RKLD. The segment covering 263-273 has biased composition (basic residues); the sequence is RHVRKRRRKRN. Positions 280–289 are enriched in polar residues; it reads TTNTGGSDSP. Ser286, Ser288, and Ser290 each carry phosphoserine. A Phosphoserine; by autocatalysis modification is found at Ser315. Basic and acidic residues predominate over residues 388–398; sequence LKDERRVKSPE. Over residues 470–494 the composition is skewed to low complexity; the sequence is GSGSSKQGSGASSKKAQQNAQAKPA. Ser603 is subject to Phosphoserine. 5 disordered regions span residues 1016–1038, 1149–1208, 1296–1336, 1368–1391, and 1415–1435; these read KPTQ…TDAD, LENM…LATN, AQNQ…PSRK, GMQS…SEKE, and KRHG…FTLK. The span at 1019-1028 shows a compositional bias: basic and acidic residues; the sequence is QTKEEQESQP. Over residues 1151–1160 the composition is skewed to polar residues; the sequence is NMLSNKKTST. Basic and acidic residues predominate over residues 1163-1183; sequence SREREELERQELLRQLDEEHG. The segment covering 1184 to 1193 has biased composition (gly residues); the sequence is GPSGSGGAKG. Polar residues predominate over residues 1368-1379; sequence GMQSSLSQSNPS. Positions 1442–1448 match the Nuclear localization signal motif; sequence GKKKRRV. Bromo domains are found at residues 1466 to 1574 and 1588 to 1696; these read RRRT…LAER and LLDD…LIEF. Residues 1515-2065 enclose the Protein kinase 2 domain; that stretch reads MDLQTMREYI…QHQQMGQAAS (551 aa). Disordered regions lie at residues 1710-1872, 1973-1992, 2018-2042, and 2101-2129; these read TQER…LDQG, LSHE…STSA, NNGM…SRVR, and QHQV…AWTF. Ser1740 carries the phosphoserine modification. The segment covering 1836 to 1863 has biased composition (acidic residues); sequence LDEDLQCSTDDEDDDEEEDFQEVSEDEN. Acidic residues predominate over residues 2023 to 2037; that stretch reads IDDDLDISESDEEDD. Over residues 2101–2120 the composition is skewed to low complexity; sequence QHQVMPPMQSEQLQQQQTPQ.

The protein belongs to the TAF1 family. As to quaternary structure, belongs to the TFIID complex which is composed of TATA binding protein (Tbp) and a number of TBP-associated factors (Tafs). Taf1 is the largest component of the TFIID complex. Interacts with Tbp, Taf2, Taf4 and Taf6. Mg(2+) is required as a cofactor.

Its subcellular location is the nucleus. The catalysed reaction is L-seryl-[protein] + ATP = O-phospho-L-seryl-[protein] + ADP + H(+). It catalyses the reaction L-threonyl-[protein] + ATP = O-phospho-L-threonyl-[protein] + ADP + H(+). Autophosphorylates on Ser residues. In terms of biological role, TFIID is a multimeric protein complex that plays a central role in mediating promoter responses to various activators and repressors. Largest component and core scaffold of the complex. Contains N- and C-terminal Ser/Thr kinase domains which can autophosphorylate or transphosphorylate other transcription factors. Possesses DNA-binding activity. Essential for progression of the G1 phase of the cell cycle. Negative regulator of the TATA box-binding activity of Tbp. In Drosophila melanogaster (Fruit fly), this protein is Transcription initiation factor TFIID subunit 1 (Taf1).